The sequence spans 254 residues: Alcohol dehydrogenase (254 aa).

10–33 provides a ligand contact to NAD(+); the sequence is FVAGLGGIGLDTSREIVKSGPKNL. Ser138 is a substrate binding site. Tyr151 functions as the Proton acceptor in the catalytic mechanism.

The protein belongs to the short-chain dehydrogenases/reductases (SDR) family. In terms of assembly, homodimer.

The catalysed reaction is a primary alcohol + NAD(+) = an aldehyde + NADH + H(+). It catalyses the reaction a secondary alcohol + NAD(+) = a ketone + NADH + H(+). The protein is Alcohol dehydrogenase (Adh) of Drosophila nigra (Fruit fly).